Here is a 545-residue protein sequence, read N- to C-terminus: CTP synthase (545 aa).

Residues 1-266 (MTKNYIFITG…DDYICNYFKL (266 aa)) form an amidoligase domain region. Ser14 is a CTP binding site. Ser14 is a UTP binding site. Residues 15 to 20 (SLGKGI) and Asp72 contribute to the ATP site. Positions 72 and 140 each coordinate Mg(2+). CTP is bound by residues 147–149 (DIE), 187–192 (KTKPTQ), and Lys223. Residues 187–192 (KTKPTQ) and Lys223 each bind UTP. Residue 239-241 (KDV) participates in ATP binding. One can recognise a Glutamine amidotransferase type-1 domain in the interval 291–543 (VIGIIGKYIK…IKSAGKHKKN (253 aa)). Position 352 (Gly352) interacts with L-glutamine. Cys379 (nucleophile; for glutamine hydrolysis) is an active-site residue. L-glutamine-binding positions include 380 to 383 (LGMQ), Glu403, and Arg471. Catalysis depends on residues His516 and Glu518.

This sequence belongs to the CTP synthase family. In terms of assembly, homotetramer.

The enzyme catalyses UTP + L-glutamine + ATP + H2O = CTP + L-glutamate + ADP + phosphate + 2 H(+). The catalysed reaction is L-glutamine + H2O = L-glutamate + NH4(+). It carries out the reaction UTP + NH4(+) + ATP = CTP + ADP + phosphate + 2 H(+). It participates in pyrimidine metabolism; CTP biosynthesis via de novo pathway; CTP from UDP: step 2/2. Its activity is regulated as follows. Allosterically activated by GTP, when glutamine is the substrate; GTP has no effect on the reaction when ammonia is the substrate. The allosteric effector GTP functions by stabilizing the protein conformation that binds the tetrahedral intermediate(s) formed during glutamine hydrolysis. Inhibited by the product CTP, via allosteric rather than competitive inhibition. Functionally, catalyzes the ATP-dependent amination of UTP to CTP with either L-glutamine or ammonia as the source of nitrogen. Regulates intracellular CTP levels through interactions with the four ribonucleotide triphosphates. The polypeptide is CTP synthase (Buchnera aphidicola subsp. Acyrthosiphon pisum (strain Tuc7)).